Reading from the N-terminus, the 101-residue chain is Protein RnfH (101 aa).

The protein belongs to the UPF0125 (RnfH) family.

The chain is Protein RnfH from Coxiella burnetii (strain CbuK_Q154) (Coxiella burnetii (strain Q154)).